The following is a 34-amino-acid chain: Chlorotoxin-like peptide AaCtx (34 aa).

Cystine bridges form between Cys2/Cys19, Cys5/Cys27, Cys16/Cys32, and Cys20/Cys34.

Belongs to the short scorpion toxin superfamily. Chloride channel inhibitor family. As to expression, expressed by the venom gland.

The protein resides in the secreted. Toxin with unknown function in healthy organisms. On glioma cells, interacts with chloride channels (probably ClC-3/CLCN3) and MMP2 at the surface of glioma cells. This complex is then internalized via caveolae, thus inhibiting the chloride channels necessary for cell shrinkage and tumor propagation. Inhibits migration and invasion of U87 glioma cells expressing CLCN3/ClC-3 voltage-gated chloride channels. This chain is Chlorotoxin-like peptide AaCtx, found in Androctonus australis (Sahara scorpion).